The chain runs to 907 residues: Probable ubiquitin-conjugating enzyme E2 24 (907 aa).

2 disordered regions span residues 1-23 and 485-509; these read MEMS…EHEE and SSTV…EASS. Positions 495-509 are enriched in polar residues; the sequence is QDLSQKISQSDEASS. The region spanning 662 to 822 is the UBC core domain; it reads SWVKKVQQEW…AFLITCKSMI (161 aa). Catalysis depends on C748, which acts as the Glycyl thioester intermediate.

The protein belongs to the ubiquitin-conjugating enzyme family. In terms of assembly, interacts with PHO1. Interacts with NLA. As to expression, expressed in the vascular tissues of cotyledons, leaves, roots, sepals, filaments, anthers and junctions between the inflorescence stems and siliques.

The protein localises to the golgi apparatus membrane. The protein resides in the endoplasmic reticulum membrane. It carries out the reaction S-ubiquitinyl-[E1 ubiquitin-activating enzyme]-L-cysteine + [E2 ubiquitin-conjugating enzyme]-L-cysteine = [E1 ubiquitin-activating enzyme]-L-cysteine + S-ubiquitinyl-[E2 ubiquitin-conjugating enzyme]-L-cysteine.. It functions in the pathway protein modification; protein ubiquitination. Functionally, E2 ubiquitin-protein ligase that mediates E1-dependent protein ubiquitination. Mediates PHO1 degradation through multivesicular body-mediated vacuolar proteolysis in response to inorganic phosphate (Pi) availability. Negatively regulates the protein abundance of PHF1 and PHT1s under Pi-sufficient conditions by facilitating the degradation of PHT1 proteins at the endomembrane. Functions cooperatively with NLA to regulate the abundance of the inorganic phosphate (Pi) transporters PHT1-1, PHT1-2 and PHT1-3 in different subcellular compartments. Regulates Pi homeostasis by mediating, cooperatively with NLA, polyubiquitination of PHT1-4 and its targeting for degradation. In Arabidopsis thaliana (Mouse-ear cress), this protein is Probable ubiquitin-conjugating enzyme E2 24.